The primary structure comprises 353 residues: Guanine nucleotide-binding protein subunit alpha (353 aa).

Residues 1–21 (MGCGMSTEEKEGKARNEEIEN) are disordered. Residue glycine 2 is the site of N-myristoyl glycine attachment. A lipid anchor (S-palmitoyl cysteine) is attached at cysteine 3. Residues 7 to 21 (TEEKEGKARNEEIEN) are compositionally biased toward basic and acidic residues. Residues 32–353 (NEIKMLLLGA…QENLRLCGLI (322 aa)) enclose the G-alpha domain. The interval 35–48 (KMLLLGAGESGKST) is G1 motif. Glutamate 43, serine 44, glycine 45, lysine 46, serine 47, threonine 48, aspartate 150, leucine 175, threonine 181, glycine 203, asparagine 269, lysine 270, aspartate 272, and alanine 325 together coordinate GTP. Serine 47 provides a ligand contact to Mg(2+). The interval 173–181 (DVLRSRVKT) is G2 motif. Threonine 181 is a binding site for Mg(2+). Positions 196–205 (YRMFDVGGQR) are G3 motif. Residues 265–272 (ILFLNKID) form a G4 motif region. Residues 323–328 (TCATDT) are G5 motif.

It belongs to the G-alpha family. G(q) subfamily. G proteins are composed of 3 units; alpha, beta and gamma. The alpha chain contains the guanine nucleotide binding site. The cofactor is Mg(2+).

Its function is as follows. Guanine nucleotide-binding proteins (G proteins) are involved as modulators or transducers in various transmembrane signaling systems. Plays a role in pathogenicity, specifically in appressorium formation in rice blast disease. Also involved in mating. This Pyricularia oryzae (strain 70-15 / ATCC MYA-4617 / FGSC 8958) (Rice blast fungus) protein is Guanine nucleotide-binding protein subunit alpha (MAGB).